Reading from the N-terminus, the 469-residue chain is UDP-N-acetylmuramate--L-alanine ligase (469 aa).

Position 123-129 (123-129 (GSHGKTT)) interacts with ATP.

This sequence belongs to the MurCDEF family.

It is found in the cytoplasm. The catalysed reaction is UDP-N-acetyl-alpha-D-muramate + L-alanine + ATP = UDP-N-acetyl-alpha-D-muramoyl-L-alanine + ADP + phosphate + H(+). The protein operates within cell wall biogenesis; peptidoglycan biosynthesis. Its function is as follows. Cell wall formation. The chain is UDP-N-acetylmuramate--L-alanine ligase from Synechococcus sp. (strain CC9605).